The chain runs to 206 residues: Large ribosomal subunit protein uL3 (206 aa).

The disordered stretch occupies residues 127-151; sequence SGGPSSHGSKFHRHLGGTGQATTPA.

The protein belongs to the universal ribosomal protein uL3 family. As to quaternary structure, part of the 50S ribosomal subunit. Forms a cluster with proteins L14 and L19.

One of the primary rRNA binding proteins, it binds directly near the 3'-end of the 23S rRNA, where it nucleates assembly of the 50S subunit. This Borrelia garinii subsp. bavariensis (strain ATCC BAA-2496 / DSM 23469 / PBi) (Borreliella bavariensis) protein is Large ribosomal subunit protein uL3.